The chain runs to 398 residues: Flavohemoprotein (398 aa).

Residues 9–147 (QLTPAQIKII…LAKLLIDLEA (139 aa)) form the Globin domain. Residue H93 coordinates heme b. Active-site charge relay system residues include Y103 and E146. A reductase region spans residues 155-398 (WRWFKDFKVT…KLEYFGPYDP (244 aa)). Residues 156-263 (RWFKDFKVTR…APPAGNFVYD (108 aa)) form the FAD-binding FR-type domain. FAD is bound by residues Y196 and 212-215 (REYS). 276 to 281 (GIGITP) is a binding site for NADP(+). Position 395–398 (395–398 (PYDP)) interacts with FAD.

It belongs to the globin family. FAD serves as cofactor. Requires heme b as cofactor.

It localises to the cytoplasm. It catalyses the reaction 2 nitric oxide + NADPH + 2 O2 = 2 nitrate + NADP(+) + H(+). It carries out the reaction 2 nitric oxide + NADH + 2 O2 = 2 nitrate + NAD(+) + H(+). With respect to regulation, inhibited by imidazoles. Its function is as follows. Nitric oxide dioxygenase involved in NO detoxification in an aerobic process, termed nitric oxide dioxygenase (NOD) reaction that utilizes O(2) and NAD(P)H to convert NO to nitrate, which protects the fungus from various noxious nitrogen compounds. Therefore, plays a central role in the inducible response to nitrosative stress. Plays a role in virulence since nitric oxide is generated by macrophages of the host immune system. In Candida albicans (strain SC5314 / ATCC MYA-2876) (Yeast), this protein is Flavohemoprotein (YHB1).